A 536-amino-acid polypeptide reads, in one-letter code: B3 domain-containing protein Os03g0619800 (536 aa).

Residues 26-119 (MRCFLRRMAA…RYEVLILDSD (94 aa)) constitute a DNA-binding region (TF-B3 1). Residues 138 to 199 (DKTVDPVDSS…VEPQTPSGSD (62 aa)) form a disordered region. 2 stretches are compositionally biased toward low complexity: residues 145–160 (DSSGSSSNDTTQSSRS) and 171–183 (SSSEKSGEDSPSG). The segment at residues 231–330 (VAVMKKCNLQ…AFTVHLLQAE (100 aa)) is a DNA-binding region (TF-B3 2). The interval 335–396 (RDGTDVHKIG…SDGPSEPPYI (62 aa)) is disordered. The segment covering 344 to 355 (GSSQNKRNSKMA) has biased composition (polar residues). Residues 372 to 382 (SNKHGVSHESL) are compositionally biased toward basic and acidic residues. A DNA-binding region (TF-B3 3) is located at residues 429–529 (ISKLAGSGGK…TMEVHIISNL (101 aa)).

It localises to the nucleus. The chain is B3 domain-containing protein Os03g0619800 from Oryza sativa subsp. japonica (Rice).